The chain runs to 446 residues: Xylose isomerase 2 (446 aa).

Residues His109 and Asp112 contribute to the active site. Residues Glu240, Glu276, His279, Asp304, Asp315, Asp317, and Asp347 each contribute to the Mg(2+) site.

It belongs to the xylose isomerase family. Homotetramer. It depends on Mg(2+) as a cofactor.

It localises to the cytoplasm. It catalyses the reaction alpha-D-xylose = alpha-D-xylulofuranose. The polypeptide is Xylose isomerase 2 (Xanthomonas campestris pv. campestris (strain 8004)).